The sequence spans 461 residues: ATP synthase subunit beta (461 aa).

151-158 (GGAGVGKT) serves as a coordination point for ATP.

The protein belongs to the ATPase alpha/beta chains family. As to quaternary structure, F-type ATPases have 2 components, CF(1) - the catalytic core - and CF(0) - the membrane proton channel. CF(1) has five subunits: alpha(3), beta(3), gamma(1), delta(1), epsilon(1). CF(0) has three main subunits: a(1), b(2) and c(9-12). The alpha and beta chains form an alternating ring which encloses part of the gamma chain. CF(1) is attached to CF(0) by a central stalk formed by the gamma and epsilon chains, while a peripheral stalk is formed by the delta and b chains.

It is found in the cell inner membrane. The enzyme catalyses ATP + H2O + 4 H(+)(in) = ADP + phosphate + 5 H(+)(out). In terms of biological role, produces ATP from ADP in the presence of a proton gradient across the membrane. The catalytic sites are hosted primarily by the beta subunits. This Idiomarina loihiensis (strain ATCC BAA-735 / DSM 15497 / L2-TR) protein is ATP synthase subunit beta.